The primary structure comprises 1040 residues: Contactin-2 (1040 aa).

The signal sequence occupies residues 1-30 (MGTHARKKASLLLLVLATVALVSSPGWSFA). 6 Ig-like C2-type domains span residues 39 to 130 (PIFE…AVLR), 135 to 224 (QEFS…SVFS), 241 to 324 (PSIK…GRII), 329 to 413 (PEWL…AELA), 419 to 506 (PDFR…GILS), and 511 to 605 (TKIT…ATVL). Cystine bridges form between Cys-63-Cys-113, Cys-157-Cys-209, Cys-263-Cys-308, and Cys-350-Cys-397. N-linked (GlcNAc...) asparagine glycans are attached at residues Asn-78, Asn-200, and Asn-206. 4 N-linked (GlcNAc...) asparagine glycosylation sites follow: Asn-463, Asn-479, Asn-500, and Asn-527. 4 consecutive Fibronectin type-III domains span residues 612–710 (PPGG…TKEA), 715–812 (APSG…SAEE), 817–913 (APAK…VKPP), and 917–1008 (PPGN…NGGT). Asn-777 is a glycosylation site (N-linked (GlcNAc...) asparagine). The Cell attachment site signature appears at 796 to 798 (RGD). Asn-832, Asn-920, and Asn-942 each carry an N-linked (GlcNAc...) asparagine glycan. The interval 895–921 (RAGTGPASPSADAMTVKPPPRRPPGNI) is disordered. Residue Ala-1015 is the site of GPI-anchor amidated alanine attachment. The propeptide at 1016 to 1040 (AARPAHPGPAFSCMVILMLAGYQKL) is removed in mature form.

The protein belongs to the immunoglobulin superfamily. Contactin family. In neural tissues in embryos, and in adult brain, spinal cord and cerebellum.

The protein localises to the cell membrane. Functionally, may play a role in the initial growth and guidance of axons. May be involved in cell adhesion. In conjunction with another transmembrane protein, CNTNAP2, contributes to the organization of axonal domains at nodes of Ranvier by maintaining voltage-gated potassium channels at the juxtaparanodal region. The protein is Contactin-2 (Cntn2) of Rattus norvegicus (Rat).